A 267-amino-acid chain; its full sequence is tRNA-cytidine(32) 2-sulfurtransferase 1 (267 aa).

Residues 42–47 (SGGKDS) carry the PP-loop motif motif. [4Fe-4S] cluster is bound by residues cysteine 117, cysteine 120, and cysteine 208.

Belongs to the TtcA family. In terms of assembly, homodimer. It depends on Mg(2+) as a cofactor. [4Fe-4S] cluster is required as a cofactor.

The protein localises to the cytoplasm. The enzyme catalyses cytidine(32) in tRNA + S-sulfanyl-L-cysteinyl-[cysteine desulfurase] + AH2 + ATP = 2-thiocytidine(32) in tRNA + L-cysteinyl-[cysteine desulfurase] + A + AMP + diphosphate + H(+). It participates in tRNA modification. Functionally, catalyzes the ATP-dependent 2-thiolation of cytidine in position 32 of tRNA, to form 2-thiocytidine (s(2)C32). The sulfur atoms are provided by the cysteine/cysteine desulfurase (IscS) system. The sequence is that of tRNA-cytidine(32) 2-sulfurtransferase 1 from Francisella tularensis subsp. tularensis (strain FSC 198).